A 333-amino-acid chain; its full sequence is Ribosomal RNA small subunit methyltransferase H (333 aa).

S-adenosyl-L-methionine is bound by residues 42 to 44 (GGH), aspartate 62, phenylalanine 86, aspartate 105, and glutamine 112.

It belongs to the methyltransferase superfamily. RsmH family.

It localises to the cytoplasm. The catalysed reaction is cytidine(1402) in 16S rRNA + S-adenosyl-L-methionine = N(4)-methylcytidine(1402) in 16S rRNA + S-adenosyl-L-homocysteine + H(+). Specifically methylates the N4 position of cytidine in position 1402 (C1402) of 16S rRNA. This chain is Ribosomal RNA small subunit methyltransferase H, found in Cupriavidus necator (strain ATCC 17699 / DSM 428 / KCTC 22496 / NCIMB 10442 / H16 / Stanier 337) (Ralstonia eutropha).